We begin with the raw amino-acid sequence, 142 residues long: Large ribosomal subunit protein uL16 (142 aa).

Belongs to the universal ribosomal protein uL16 family. As to quaternary structure, part of the 50S ribosomal subunit.

In terms of biological role, binds 23S rRNA and is also seen to make contacts with the A and possibly P site tRNAs. This Aquifex aeolicus (strain VF5) protein is Large ribosomal subunit protein uL16.